We begin with the raw amino-acid sequence, 405 residues long: Riboflavin biosynthesis protein RibBA (405 aa).

Positions 1-205 are DHBP synthase; that stretch reads MSEIQLNTIE…IKDLIAYRLR (205 aa). Residues 30–31, aspartate 35, 144–148, and glutamate 168 contribute to the D-ribulose 5-phosphate site; these read RE and RAGHT. Glutamate 31 contributes to the Mg(2+) binding site. Residue histidine 147 coordinates Mg(2+). A GTP cyclohydrolase II region spans residues 206-405; sequence TESIVENGVE…RMGHVLHNIK (200 aa). Position 256–260 (256–260) interacts with GTP; the sequence is RVHSS. The Zn(2+) site is built by cysteine 261, cysteine 272, and cysteine 274. Residues glutamine 277, 299–301, and threonine 321 each bind GTP; that span reads EGR. Aspartate 333 functions as the Proton acceptor; for GTP cyclohydrolase activity in the catalytic mechanism. The active-site Nucleophile; for GTP cyclohydrolase activity is arginine 335. GTP contacts are provided by serine 356 and lysine 361.

This sequence in the N-terminal section; belongs to the DHBP synthase family. In the C-terminal section; belongs to the GTP cyclohydrolase II family. Mg(2+) serves as cofactor. The cofactor is Mn(2+). Zn(2+) is required as a cofactor.

It catalyses the reaction D-ribulose 5-phosphate = (2S)-2-hydroxy-3-oxobutyl phosphate + formate + H(+). It carries out the reaction GTP + 4 H2O = 2,5-diamino-6-hydroxy-4-(5-phosphoribosylamino)-pyrimidine + formate + 2 phosphate + 3 H(+). The protein operates within cofactor biosynthesis; riboflavin biosynthesis; 2-hydroxy-3-oxobutyl phosphate from D-ribulose 5-phosphate: step 1/1. It participates in cofactor biosynthesis; riboflavin biosynthesis; 5-amino-6-(D-ribitylamino)uracil from GTP: step 1/4. Functionally, catalyzes the conversion of D-ribulose 5-phosphate to formate and 3,4-dihydroxy-2-butanone 4-phosphate. Its function is as follows. Catalyzes the conversion of GTP to 2,5-diamino-6-ribosylamino-4(3H)-pyrimidinone 5'-phosphate (DARP), formate and pyrophosphate. In Parabacteroides distasonis (strain ATCC 8503 / DSM 20701 / CIP 104284 / JCM 5825 / NCTC 11152), this protein is Riboflavin biosynthesis protein RibBA.